The chain runs to 187 residues: MRLVLLGPPGSGKGTQAAQMKETLQIPHISTGDLLRSEVVAGTPLGLQAKQVMAQGDLVSDAILIGMLESRLSHTDVVKGFILDGYPRNLSQAAALDGLLAKLGHPLNAVVQLEVPTDVLVERIAGRAQAEGREDDTPDAVRKRLQVYNDSTAPVIGFYQQRGILLRVDGVGRLDEVSQRIVVALGC.

Position 10–15 (10–15 (GSGKGT)) interacts with ATP. The interval 30–59 (STGDLLRSEVVAGTPLGLQAKQVMAQGDLV) is NMP. AMP is bound by residues T31, R36, 57 to 59 (DLV), 85 to 88 (GYPR), and Q92. The LID stretch occupies residues 126 to 136 (GRAQAEGREDD). R127 provides a ligand contact to ATP. Residues R133 and R144 each contribute to the AMP site. G172 serves as a coordination point for ATP.

This sequence belongs to the adenylate kinase family. As to quaternary structure, monomer.

Its subcellular location is the cytoplasm. The enzyme catalyses AMP + ATP = 2 ADP. The protein operates within purine metabolism; AMP biosynthesis via salvage pathway; AMP from ADP: step 1/1. Catalyzes the reversible transfer of the terminal phosphate group between ATP and AMP. Plays an important role in cellular energy homeostasis and in adenine nucleotide metabolism. This chain is Adenylate kinase, found in Xylella fastidiosa (strain 9a5c).